The sequence spans 160 residues: Epithelial membrane protein 1 (160 aa).

A helical membrane pass occupies residues 1 to 21 (MLVLLAGLFVVHIATAIMLFV). N-linked (GlcNAc...) asparagine glycans are attached at residues asparagine 35 and asparagine 43. Helical transmembrane passes span 67-87 (FMILSIIFSIISLVVFVFQLF) and 95-115 (FFLSGSTMLVCWLCILVGVSI). Asparagine 128 carries an N-linked (GlcNAc...) asparagine glycan. A helical membrane pass occupies residues 137–157 (FILTWICFCFSFIIGILYMVL).

This sequence belongs to the PMP-22/EMP/MP20 family.

The protein resides in the membrane. The polypeptide is Epithelial membrane protein 1 (Emp1) (Mus musculus (Mouse)).